Here is a 392-residue protein sequence, read N- to C-terminus: S-adenosylmethionine synthase (392 aa).

Glu10 serves as a coordination point for Mg(2+). His16 is a binding site for ATP. Position 44 (Glu44) interacts with K(+). The L-methionine site is built by Glu57 and Gln100. Residues 168 to 170 (DGK), 236 to 239 (SGRF), Asp247, 253 to 254 (RK), Ala270, Lys274, and Lys278 contribute to the ATP site. Asp247 contributes to the L-methionine binding site. Position 278 (Lys278) interacts with L-methionine.

This sequence belongs to the AdoMet synthase family. Homotetramer. Mn(2+) serves as cofactor. Requires Mg(2+) as cofactor. The cofactor is Co(2+). It depends on K(+) as a cofactor.

Its subcellular location is the cytoplasm. It catalyses the reaction L-methionine + ATP + H2O = S-adenosyl-L-methionine + phosphate + diphosphate. It functions in the pathway amino-acid biosynthesis; S-adenosyl-L-methionine biosynthesis; S-adenosyl-L-methionine from L-methionine: step 1/1. In terms of biological role, catalyzes the formation of S-adenosylmethionine from methionine and ATP. The reaction comprises two steps that are both catalyzed by the same enzyme: formation of S-adenosylmethionine (AdoMet) and triphosphate, and subsequent hydrolysis of the triphosphate. In Phaseolus lunatus (Lima bean), this protein is S-adenosylmethionine synthase (SAMS).